The primary structure comprises 320 residues: Cytochrome f (320 aa).

The signal sequence occupies residues 1-35 (MENKNTFSWVKEQMTRSISVSIMIYVITQTSISNA). Heme contacts are provided by tyrosine 36, cysteine 56, cysteine 59, and histidine 60. Residues 286-306 (VQGLLFFFASVILAQVFLVLK) form a helical membrane-spanning segment.

Belongs to the cytochrome f family. As to quaternary structure, the 4 large subunits of the cytochrome b6-f complex are cytochrome b6, subunit IV (17 kDa polypeptide, petD), cytochrome f and the Rieske protein, while the 4 small subunits are PetG, PetL, PetM and PetN. The complex functions as a dimer. Requires heme as cofactor.

It is found in the plastid. It localises to the chloroplast thylakoid membrane. Its function is as follows. Component of the cytochrome b6-f complex, which mediates electron transfer between photosystem II (PSII) and photosystem I (PSI), cyclic electron flow around PSI, and state transitions. This chain is Cytochrome f, found in Lolium perenne (Perennial ryegrass).